We begin with the raw amino-acid sequence, 318 residues long: Aspartate carbamoyltransferase catalytic subunit (318 aa).

Residues arginine 67 and threonine 68 each contribute to the carbamoyl phosphate site. Residue lysine 95 coordinates L-aspartate. Residues arginine 117, histidine 145, and glutamine 148 each coordinate carbamoyl phosphate. Positions 178 and 236 each coordinate L-aspartate. Residues glycine 277 and proline 278 each coordinate carbamoyl phosphate.

Belongs to the aspartate/ornithine carbamoyltransferase superfamily. ATCase family. Heterododecamer (2C3:3R2) of six catalytic PyrB chains organized as two trimers (C3), and six regulatory PyrI chains organized as three dimers (R2).

It carries out the reaction carbamoyl phosphate + L-aspartate = N-carbamoyl-L-aspartate + phosphate + H(+). The protein operates within pyrimidine metabolism; UMP biosynthesis via de novo pathway; (S)-dihydroorotate from bicarbonate: step 2/3. Functionally, catalyzes the condensation of carbamoyl phosphate and aspartate to form carbamoyl aspartate and inorganic phosphate, the committed step in the de novo pyrimidine nucleotide biosynthesis pathway. This chain is Aspartate carbamoyltransferase catalytic subunit, found in Roseiflexus sp. (strain RS-1).